Here is a 390-residue protein sequence, read N- to C-terminus: Carbamoyl phosphate synthase small chain (390 aa).

The CPSase stretch occupies residues 1–198 (MTSTPTPTPT…LGEGYAVGPE (198 aa)). Ser-53, Gly-250, and Gly-252 together coordinate L-glutamine. The Glutamine amidotransferase type-1 domain occupies 202 to 390 (RVVVLDYGVK…VGELKGRVEA (189 aa)). The active-site Nucleophile is the Cys-279. Residues Leu-280, Gln-283, Asn-321, Gly-323, and Phe-324 each coordinate L-glutamine. Catalysis depends on residues His-363 and Glu-365.

Belongs to the CarA family. As to quaternary structure, composed of two chains; the small (or glutamine) chain promotes the hydrolysis of glutamine to ammonia, which is used by the large (or ammonia) chain to synthesize carbamoyl phosphate. Tetramer of heterodimers (alpha,beta)4.

It carries out the reaction hydrogencarbonate + L-glutamine + 2 ATP + H2O = carbamoyl phosphate + L-glutamate + 2 ADP + phosphate + 2 H(+). The catalysed reaction is L-glutamine + H2O = L-glutamate + NH4(+). The protein operates within amino-acid biosynthesis; L-arginine biosynthesis; carbamoyl phosphate from bicarbonate: step 1/1. Its pathway is pyrimidine metabolism; UMP biosynthesis via de novo pathway; (S)-dihydroorotate from bicarbonate: step 1/3. Small subunit of the glutamine-dependent carbamoyl phosphate synthetase (CPSase). CPSase catalyzes the formation of carbamoyl phosphate from the ammonia moiety of glutamine, carbonate, and phosphate donated by ATP, constituting the first step of 2 biosynthetic pathways, one leading to arginine and/or urea and the other to pyrimidine nucleotides. The small subunit (glutamine amidotransferase) binds and cleaves glutamine to supply the large subunit with the substrate ammonia. The polypeptide is Carbamoyl phosphate synthase small chain (Maricaulis maris (strain MCS10) (Caulobacter maris)).